Consider the following 1310-residue polypeptide: Major viral transcription factor ICP4 homolog (1310 aa).

Disordered regions lie at residues 117-271 (AGAR…GPVE), 285-454 (GAKA…TPII), and 636-696 (GSSP…SLLD). Residues 341–350 (PVEKKPKSRE) are compositionally biased toward basic and acidic residues. 3 stretches are compositionally biased toward low complexity: residues 351–364 (FVSSSSSSSSWGSS), 392–407 (PSPSNSDDSDSNDGGS), and 648–666 (PSPTTPATQTPDPQPSAAA). Residues 677–685 (RLRTPRKRK) carry the Nuclear localization signal motif. Phosphoserine; by VZV ORF66 occurs at positions 686 and 722. Disordered regions lie at residues 1195–1258 (RFVF…SFGV) and 1282–1310 (ELLSSSSSSEDEDDVWGGRGGRSPPQSRG). The span at 1217–1227 (RTADDREHALE) shows a compositional bias: basic and acidic residues. Acidic residues predominate over residues 1228–1250 (PDDWEVGCEDAWDSEEGGGDDGD).

This sequence belongs to the herpesviridae ICP4 family. As to quaternary structure, interacts with IE4 and IE63. Interacts with human USF1 and SP1. Post-translationally, phosphorylated by ORF66 protein kinase on Ser-686 and Ser-722. Also phosphorylated by ORF47 protein kinase and by human CSNK2A1/CKII.

The protein resides in the host nucleus. Its subcellular location is the host cytoplasm. It is found in the virion tegument. Transcriptional transactivator. May interact with and recruit specific components of the general transcription machinery to viral promoters and stabilize their formation for transcription initiation. Negatively regulates its own transcription. This immediate early (EI) protein may be necessary in virion for viral pathogenesis. The chain is Major viral transcription factor ICP4 homolog from Homo sapiens (Human).